A 538-amino-acid polypeptide reads, in one-letter code: Phosphoenolpyruvate carboxykinase (ATP) (538 aa).

Positions 61, 195, and 201 each coordinate substrate. ATP contacts are provided by residues K201, H220, and 236 to 244; that span reads GLSGTGKTT. Mn(2+) is bound by residues K201 and H220. Mn(2+) is bound at residue D257. Residues E285, R323, and T449 each coordinate ATP. R323 contributes to the substrate binding site.

It belongs to the phosphoenolpyruvate carboxykinase (ATP) family. Mn(2+) serves as cofactor.

Its subcellular location is the cytoplasm. It catalyses the reaction oxaloacetate + ATP = phosphoenolpyruvate + ADP + CO2. The protein operates within carbohydrate biosynthesis; gluconeogenesis. In terms of biological role, involved in the gluconeogenesis. Catalyzes the conversion of oxaloacetate (OAA) to phosphoenolpyruvate (PEP) through direct phosphoryl transfer between the nucleoside triphosphate and OAA. The chain is Phosphoenolpyruvate carboxykinase (ATP) from Nitrobacter hamburgensis (strain DSM 10229 / NCIMB 13809 / X14).